We begin with the raw amino-acid sequence, 212 residues long: Adenylate kinase (212 aa).

An ATP-binding site is contributed by 14-19 (GSGKGT). An NMP region spans residues 34–63 (STGDLFRKKISEDSRFAAQIQNYLSSGSYV). AMP is bound by residues T35, R40, 61–63 (SYV), 89–92 (GYPR), and Q96. The interval 126 to 163 (QRLFCQKCQKSYNLLLAKPKNGLKCDLDNTDLITRNDD) is LID. Residue R127 coordinates ATP. Zn(2+)-binding residues include C130 and C133. 136 to 137 (SY) provides a ligand contact to ATP. Zn(2+)-binding residues include C150 and D153. AMP contacts are provided by R160 and R171. Residue Q199 coordinates ATP.

It belongs to the adenylate kinase family. As to quaternary structure, monomer.

It is found in the cytoplasm. The catalysed reaction is AMP + ATP = 2 ADP. It functions in the pathway purine metabolism; AMP biosynthesis via salvage pathway; AMP from ADP: step 1/1. Functionally, catalyzes the reversible transfer of the terminal phosphate group between ATP and AMP. Plays an important role in cellular energy homeostasis and in adenine nucleotide metabolism. In Mesomycoplasma hyopneumoniae (strain 232) (Mycoplasma hyopneumoniae), this protein is Adenylate kinase.